A 331-amino-acid polypeptide reads, in one-letter code: Probable 5-dehydro-4-deoxyglucarate dehydratase 2 (331 aa).

Residues 1–23 (MSADTDTDTDTGTGTGPDTDTGT) form a disordered region. The span at 10–23 (DTGTGTGPDTDTGT) shows a compositional bias: low complexity.

It belongs to the DapA family.

It carries out the reaction 5-dehydro-4-deoxy-D-glucarate + H(+) = 2,5-dioxopentanoate + CO2 + H2O. It functions in the pathway carbohydrate acid metabolism; D-glucarate degradation; 2,5-dioxopentanoate from D-glucarate: step 2/2. The polypeptide is Probable 5-dehydro-4-deoxyglucarate dehydratase 2 (Streptomyces avermitilis (strain ATCC 31267 / DSM 46492 / JCM 5070 / NBRC 14893 / NCIMB 12804 / NRRL 8165 / MA-4680)).